The sequence spans 1096 residues: DNA-directed RNA polymerase subunit beta (1096 aa).

Residues Leu1070–Asp1096 form a disordered region.

It belongs to the RNA polymerase beta chain family. In terms of assembly, in cyanobacteria the RNAP catalytic core is composed of 2 alpha, 1 beta, 1 beta', 1 gamma and 1 omega subunit. When a sigma factor is associated with the core the holoenzyme is formed, which can initiate transcription.

It catalyses the reaction RNA(n) + a ribonucleoside 5'-triphosphate = RNA(n+1) + diphosphate. Its function is as follows. DNA-dependent RNA polymerase catalyzes the transcription of DNA into RNA using the four ribonucleoside triphosphates as substrates. This chain is DNA-directed RNA polymerase subunit beta, found in Prochlorococcus marinus (strain MIT 9211).